The sequence spans 422 residues: Putative FBD-associated F-box protein At1g55030 (422 aa).

In terms of domain architecture, F-box spans 8–60 (TDMISQLPEPLILQILGSLPTKVAITTSVLSKQWQSHWKMMPKLEFDSFLRRL). LRR repeat units follow at residues 132 to 153 (TLETLELILNVVMDVPPSVYLK), 154 to 175 (SLKTLYLLAVDFKDDESVINLL), and 180 to 201 (NLQDLVMRRNSSSNVKTFTIAV). The FBD domain maps to 342 to 391 (EWNQPKNVPECLHHLEKFIWEGYKWKREEIEVAKYILKNTNRLKRAIFSL).

The polypeptide is Putative FBD-associated F-box protein At1g55030 (Arabidopsis thaliana (Mouse-ear cress)).